Reading from the N-terminus, the 95-residue chain is Aspartyl/glutamyl-tRNA(Asn/Gln) amidotransferase subunit C (95 aa).

It belongs to the GatC family. In terms of assembly, heterotrimer of A, B and C subunits.

The catalysed reaction is L-glutamyl-tRNA(Gln) + L-glutamine + ATP + H2O = L-glutaminyl-tRNA(Gln) + L-glutamate + ADP + phosphate + H(+). It catalyses the reaction L-aspartyl-tRNA(Asn) + L-glutamine + ATP + H2O = L-asparaginyl-tRNA(Asn) + L-glutamate + ADP + phosphate + 2 H(+). Its function is as follows. Allows the formation of correctly charged Asn-tRNA(Asn) or Gln-tRNA(Gln) through the transamidation of misacylated Asp-tRNA(Asn) or Glu-tRNA(Gln) in organisms which lack either or both of asparaginyl-tRNA or glutaminyl-tRNA synthetases. The reaction takes place in the presence of glutamine and ATP through an activated phospho-Asp-tRNA(Asn) or phospho-Glu-tRNA(Gln). This Hyphomonas neptunium (strain ATCC 15444) protein is Aspartyl/glutamyl-tRNA(Asn/Gln) amidotransferase subunit C.